A 98-amino-acid chain; its full sequence is Flagellar hook-basal body complex protein FliE (98 aa).

Belongs to the FliE family.

The protein resides in the bacterial flagellum basal body. The chain is Flagellar hook-basal body complex protein FliE from Listeria monocytogenes serovar 1/2a (strain ATCC BAA-679 / EGD-e).